A 206-amino-acid polypeptide reads, in one-letter code: MAFTLPELPYAPNALEPFFDEATMRLHHGKHHQTYVNNLNAAIEKHNELDDLSLEELLTDLSAIPEDIRTAVRNNGGGHLNHSQFWLWLRPNTDGSENHADGEIGDAIAKEFGSFETFKTEFKAAATGRFGSGWAWLVVDEAGKLKVVSTANQDNPISEGLTPVLGLDVWEHAYYLKYHNVRPDYIEAFFNLVNWDKVNELYAKAK.

4 residues coordinate Mn(2+): histidine 27, histidine 82, aspartate 168, and histidine 172.

The protein belongs to the iron/manganese superoxide dismutase family. It depends on Mn(2+) as a cofactor.

It carries out the reaction 2 superoxide + 2 H(+) = H2O2 + O2. Its function is as follows. Destroys superoxide anion radicals which are normally produced within the cells and which are toxic to biological systems. The chain is Superoxide dismutase [Mn] (sodA) from Lactococcus lactis subsp. lactis (strain IL1403) (Streptococcus lactis).